A 2190-amino-acid chain; its full sequence is Integrator complex subunit 1 (2190 aa).

A disordered region spans residues 1–61 (MNRAKPTTVR…GLPSERKRDA (61 aa)). Ser-13 carries the phosphoserine modification. The segment covering 34 to 44 (GQANESKTAST) has biased composition (polar residues). An N6-acetyllysine modification is found at Lys-47. Position 83 is a phosphothreonine (Thr-83). 3 positions are modified to phosphoserine: Ser-87, Ser-307, and Ser-924. The disordered stretch occupies residues 922-945 (AASGEEDDEGESKEQKAKKRQRQQ). A compositionally biased stretch (acidic residues) spans 923 to 932 (ASGEEDDEGE). A helical transmembrane segment spans residues 1159-1179 (TATMHILVVHAMVILLTLGPP). The segment at 1311 to 1334 (SLPPRRDSTEAPKPKSSPEQPIGQ) is disordered. Residues 1314-1323 (PRRDSTEAPK) show a composition bias toward basic and acidic residues. Phosphoserine is present on residues Ser-1318, Ser-1326, Ser-1327, and Ser-1395.

This sequence belongs to the Integrator subunit 1 family. As to quaternary structure, component of the Integrator complex, composed of core subunits INTS1, INTS2, INTS3, INTS4, INTS5, INTS6, INTS7, INTS8, INTS9/RC74, INTS10, INTS11/CPSF3L, INTS12, INTS13, INTS14 and INTS15. The core complex associates with protein phosphatase 2A subunits PPP2CA and PPP2R1A, to form the Integrator-PP2A (INTAC) complex. Interacts with ESRRB, ESRRB is not a core component of the Integrator complex and this association is a bridge for the interaction with the multiprotein complex Integrator; attracts the transcriptional machinery.

It is found in the nucleus. It localises to the nucleus membrane. Functionally, component of the integrator complex, a multiprotein complex that terminates RNA polymerase II (Pol II) transcription in the promoter-proximal region of genes. The integrator complex provides a quality checkpoint during transcription elongation by driving premature transcription termination of transcripts that are unfavorably configured for transcriptional elongation: the complex terminates transcription by (1) catalyzing dephosphorylation of the C-terminal domain (CTD) of Pol II subunit POLR2A/RPB1 and SUPT5H/SPT5, (2) degrading the exiting nascent RNA transcript via endonuclease activity and (3) promoting the release of Pol II from bound DNA. The integrator complex is also involved in terminating the synthesis of non-coding Pol II transcripts, such as enhancer RNAs (eRNAs), small nuclear RNAs (snRNAs), telomerase RNAs and long non-coding RNAs (lncRNAs). Within the integrator complex, INTS1 is involved in the post-termination step: INTS1 displaces INTS3 and the SOSS factors, allowing the integrator complex to return to the closed conformation, ready to bind to the paused elongation complex for another termination cycle. Mediates recruitment of cytoplasmic dynein to the nuclear envelope, probably as component of the integrator complex. This chain is Integrator complex subunit 1, found in Homo sapiens (Human).